We begin with the raw amino-acid sequence, 221 residues long: Large ribosomal subunit protein uL3 (221 aa).

This sequence belongs to the universal ribosomal protein uL3 family. As to quaternary structure, part of the 50S ribosomal subunit. Forms a cluster with proteins L14 and L19.

One of the primary rRNA binding proteins, it binds directly near the 3'-end of the 23S rRNA, where it nucleates assembly of the 50S subunit. The protein is Large ribosomal subunit protein uL3 of Chlamydia felis (strain Fe/C-56) (Chlamydophila felis).